A 153-amino-acid chain; its full sequence is 3-hydroxyacyl-[acyl-carrier-protein] dehydratase FabZ (153 aa).

H57 is an active-site residue.

It belongs to the thioester dehydratase family. FabZ subfamily.

Its subcellular location is the cytoplasm. The catalysed reaction is a (3R)-hydroxyacyl-[ACP] = a (2E)-enoyl-[ACP] + H2O. Functionally, involved in unsaturated fatty acids biosynthesis. Catalyzes the dehydration of short chain beta-hydroxyacyl-ACPs and long chain saturated and unsaturated beta-hydroxyacyl-ACPs. In Xanthomonas campestris pv. campestris (strain 8004), this protein is 3-hydroxyacyl-[acyl-carrier-protein] dehydratase FabZ.